The chain runs to 143 residues: Large ribosomal subunit protein uL16 (143 aa).

Residues 1-17 (MLQPKKTKFRRSQKGRM) are compositionally biased toward basic residues. Residues 1-25 (MLQPKKTKFRRSQKGRMKGNAQRGN) form a disordered region.

This sequence belongs to the universal ribosomal protein uL16 family. Part of the 50S ribosomal subunit.

Functionally, binds 23S rRNA and is also seen to make contacts with the A and possibly P site tRNAs. The polypeptide is Large ribosomal subunit protein uL16 (Azobacteroides pseudotrichonymphae genomovar. CFP2).